The primary structure comprises 810 residues: Janus kinase and microtubule-interacting protein 2 (810 aa).

Coiled-coil stretches lie at residues 13 to 102 (EALI…EMSR), 148 to 178 (ERLKLLQEIADLKTAKKQVDEALSNMIQADK), and 207 to 244 (RRLMDEIKAKDRIIFSLEKELETQTGYVQKLQLQKEAL). Residues 261–274 (PKREIPGRAGDGSE) are compositionally biased toward basic and acidic residues. Disordered stretches follow at residues 261–280 (PKREIPGRAGDGSEHCSSPD) and 437–465 (YDEDSMDSETSSMASFRTDRTPATPDDDL). The stretch at 280-419 (DLRRNQKRIA…REKLIRRRKH (140 aa)) forms a coiled coil. Coiled coils occupy residues 468 to 597 (SLAA…RERR) and 664 to 808 (EKWI…SNRK).

It belongs to the JAKMIP family. In terms of tissue distribution, highly expressed in brain, moderately expressed in thymus, spleen and lung, and weakly expressed in kidney, liver and peripheral blood lymphocytes. Also expressed in adrenal and pituitary glands, as well as testis.

The protein resides in the golgi apparatus. The protein is Janus kinase and microtubule-interacting protein 2 (JAKMIP2) of Homo sapiens (Human).